Reading from the N-terminus, the 163-residue chain is 6,7-dimethyl-8-ribityllumazine synthase (163 aa).

Residues phenylalanine 27, 58–60 (ALE), and 87–89 (CVV) each bind 5-amino-6-(D-ribitylamino)uracil. 92–93 (DT) is a (2S)-2-hydroxy-3-oxobutyl phosphate binding site. Catalysis depends on histidine 95, which acts as the Proton donor. Asparagine 120 serves as a coordination point for 5-amino-6-(D-ribitylamino)uracil. Arginine 134 is a binding site for (2S)-2-hydroxy-3-oxobutyl phosphate.

This sequence belongs to the DMRL synthase family.

It catalyses the reaction (2S)-2-hydroxy-3-oxobutyl phosphate + 5-amino-6-(D-ribitylamino)uracil = 6,7-dimethyl-8-(1-D-ribityl)lumazine + phosphate + 2 H2O + H(+). It participates in cofactor biosynthesis; riboflavin biosynthesis; riboflavin from 2-hydroxy-3-oxobutyl phosphate and 5-amino-6-(D-ribitylamino)uracil: step 1/2. Catalyzes the formation of 6,7-dimethyl-8-ribityllumazine by condensation of 5-amino-6-(D-ribitylamino)uracil with 3,4-dihydroxy-2-butanone 4-phosphate. This is the penultimate step in the biosynthesis of riboflavin. This Rhodopseudomonas palustris (strain BisA53) protein is 6,7-dimethyl-8-ribityllumazine synthase.